Reading from the N-terminus, the 808-residue chain is METGTAPLVAPPRRHGAPAAPSPPPRGSRAGPVVVVAPGPPVTTATSAPVTLVAPGEARPAWVPGSAETSAPAPAPAPAPAPAVTGSTVVVLTLEASPEAPKPQLPSGPESPEPAAVAGVETSRALAAGADSPKTEEARPSPAPGPGTPTGTPTRTPSRTAPGALTAKPPLAPKPGTTVASGVTARSASGQVTGGHGAAAATSASAGQAPEDPSGPGTGPSGTCEAPVAVVTVTPAPEPAENSQDLGSTSSLGPGISGPRGQAPDTLSYLDSVSLMSGTLESLADDVSSMGSDSEINGLALRKTDKYGFLGGSQYSGSLESSIPVDVARQRELKWLDMFSNWDKWLSRRFQKVKLRCRKGIPSSLRAKAWQYLSNSKELLEQNPGKFEELERAPGDPKWLDVIEKDLHRQFPFHEMFAARGGHGQQDLYRILKAYTIYRPDEGYCQAQAPVAAVLLMHMPAEQAFWCLVQICDKYLPGYYSAGLEAIQLDGEIFFALLRRASPLAHRHLRRQRIDPVLYMTEWFMCIFARTLPWASVLRVWDMFFCEGVKIIFRVALVLLRHTLGSVEKLRSCQGMYETMEQLRNLPQQCMQEDFLVHEVTNLPVTEALIERENAAQLKKWRETRGELQYRPSRRLHGSRAIHEERRRQQPPLGPSSSLLSLPGLKSRGSRAAGGAPSPPPPVRRASAGPAPGPVVTAEGLHPSLPSPTGNSTPLGSSKETRKQEKERQKQEKERQKQEKEREKERQKQEKEREKQEKEREKQEKERQKQEKKAQGRKLSLRRKADGPPGPHDGGDRPSAEARQDAYF.

3 disordered regions span residues 1 to 38 (METG…VVAP), 60 to 225 (PAWV…GTCE), and 237 to 264 (PEPA…GQAP). At serine 22 the chain carries Phosphoserine. Low complexity predominate over residues 27 to 38 (GSRAGPVVVVAP). Pro residues predominate over residues 100 to 112 (APKPQLPSGPESP). Serine 141 carries the phosphoserine modification. A compositionally biased stretch (low complexity) spans 149-178 (PTGTPTRTPSRTAPGALTAKPPLAPKPGTT). Threonine 152 bears the Phosphothreonine mark. The span at 179–189 (VASGVTARSAS) shows a compositional bias: polar residues. Omega-N-methylarginine is present on arginine 186. Positions 198 to 209 (AAAATSASAGQA) are enriched in low complexity. Positions 242 to 252 (NSQDLGSTSSL) are enriched in polar residues. Residues 360–548 (GIPSSLRAKA…RVWDMFFCEG (189 aa)) form the Rab-GAP TBC domain. The segment at 629–808 (QYRPSRRLHG…SAEARQDAYF (180 aa)) is disordered. Residues 655 to 676 (PSSSLLSLPGLKSRGSRAAGGA) are compositionally biased toward low complexity. A phosphoserine mark is found at serine 658, serine 661, serine 678, and serine 687. Low complexity predominate over residues 684-696 (RRASAGPAPGPVV). Residues 707–718 (SPTGNSTPLGSS) show a composition bias toward polar residues. The stretch at 716–782 (GSSKETRKQE…KAQGRKLSLR (67 aa)) forms a coiled coil. Composition is skewed to basic and acidic residues over residues 719–774 (KETR…EKKA) and 793–808 (DGGD…DAYF).

Its subcellular location is the cytoplasm. The protein resides in the cell membrane. Acts as a GTPase-activating protein for RAB3A, RAB22A, RAB27A, and RAB35. Does not act on RAB2A and RAB6A. The chain is TBC1 domain family member 10B (TBC1D10B) from Homo sapiens (Human).